Consider the following 111-residue polypeptide: Small ribosomal subunit protein bS16 (111 aa).

It belongs to the bacterial ribosomal protein bS16 family.

In Rickettsia prowazekii (strain Madrid E), this protein is Small ribosomal subunit protein bS16.